The sequence spans 223 residues: MARNFLTIALPKGKLLTDSLEALTKIGIECQEVSEESRKLVFPLEKAQAQIIICRPTDIPTFVEYGAADIGFVGKDTLLEENKDVVELLDLGFGYCRFVVAMPEEKVPPRLPDGRFDLSGLNHQRVATKFPRVAEDFFREQGMQVLPIKLHGNIELAPRVGLAEMIVDIVSTGTTLRQNKLVEIAPILEATTRLIANRVAYRMKHERINELTEKLRQLLGKAP.

The protein belongs to the ATP phosphoribosyltransferase family. Short subfamily. In terms of assembly, heteromultimer composed of HisG and HisZ subunits.

The protein localises to the cytoplasm. It carries out the reaction 1-(5-phospho-beta-D-ribosyl)-ATP + diphosphate = 5-phospho-alpha-D-ribose 1-diphosphate + ATP. It functions in the pathway amino-acid biosynthesis; L-histidine biosynthesis; L-histidine from 5-phospho-alpha-D-ribose 1-diphosphate: step 1/9. Catalyzes the condensation of ATP and 5-phosphoribose 1-diphosphate to form N'-(5'-phosphoribosyl)-ATP (PR-ATP). Has a crucial role in the pathway because the rate of histidine biosynthesis seems to be controlled primarily by regulation of HisG enzymatic activity. In Desulfitobacterium hafniense (strain Y51), this protein is ATP phosphoribosyltransferase.